A 452-amino-acid chain; its full sequence is Phosphatidate cytidylyltransferase, mitochondrial (452 aa).

The protein belongs to the TAM41 family. It depends on Mg(2+) as a cofactor.

The protein localises to the mitochondrion inner membrane. It catalyses the reaction a 1,2-diacyl-sn-glycero-3-phosphate + CTP + H(+) = a CDP-1,2-diacyl-sn-glycerol + diphosphate. Its pathway is phospholipid metabolism; CDP-diacylglycerol biosynthesis; CDP-diacylglycerol from sn-glycerol 3-phosphate: step 3/3. Catalyzes the conversion of phosphatidic acid (PA) to CDP-diacylglycerol (CDP-DAG), an essential intermediate in the synthesis of phosphatidylglycerol, cardiolipin and phosphatidylinositol. This is Phosphatidate cytidylyltransferase, mitochondrial (TAMM41) from Homo sapiens (Human).